The chain runs to 439 residues: Na(+)/H(+) antiporter NhaA (439 aa).

A run of 11 helical transmembrane segments spans residues 12–32 (SMNI…AIIA), 67–87 (MIEF…GLEI), 103–123 (ALPF…YMSI), 133–153 (GLAI…SLLG), 162–182 (IFLT…IALF), 186–206 (HVSY…YFIG), 214–234 (IFFL…GIHS), 314–334 (ILPL…GELV), 341–361 (VAAG…WLAI), 379–399 (GIAL…NLSF), and 412–432 (FGVL…LRIV).

The protein belongs to the NhaA Na(+)/H(+) (TC 2.A.33) antiporter family.

It localises to the cell inner membrane. It catalyses the reaction Na(+)(in) + 2 H(+)(out) = Na(+)(out) + 2 H(+)(in). Its function is as follows. Na(+)/H(+) antiporter that extrudes sodium in exchange for external protons. This chain is Na(+)/H(+) antiporter NhaA, found in Bacteroides thetaiotaomicron (strain ATCC 29148 / DSM 2079 / JCM 5827 / CCUG 10774 / NCTC 10582 / VPI-5482 / E50).